Here is a 179-residue protein sequence, read N- to C-terminus: Large ribosomal subunit protein uL5 (179 aa).

This sequence belongs to the universal ribosomal protein uL5 family. In terms of assembly, part of the 50S ribosomal subunit; part of the 5S rRNA/L5/L18/L25 subcomplex. Contacts the 5S rRNA and the P site tRNA. Forms a bridge to the 30S subunit in the 70S ribosome.

In terms of biological role, this is one of the proteins that bind and probably mediate the attachment of the 5S RNA into the large ribosomal subunit, where it forms part of the central protuberance. In the 70S ribosome it contacts protein S13 of the 30S subunit (bridge B1b), connecting the 2 subunits; this bridge is implicated in subunit movement. Contacts the P site tRNA; the 5S rRNA and some of its associated proteins might help stabilize positioning of ribosome-bound tRNAs. The protein is Large ribosomal subunit protein uL5 of Geobacillus thermodenitrificans (strain NG80-2).